Here is a 336-residue protein sequence, read N- to C-terminus: MSRPSLTRFLIEEQHAGRIDAELRQLITIVSRACKRISIAVSKGTLGGVLGDAGTGNVQGEAQKKLDVLSNDILLEANAWGGHLAACASEEMDHSQPVPDQYPSGDFLLLFDPLDGSSNIDVNVSVGTIFSVLRAPKGTEKPGDEHFLQPGTQQVAAGYCIYGPSTMLVLTLGHGTHAFTLEREEGSFLLTQANMRVPEDTAEYAINMSNQRHWEPAMQAYVGDLLAGKDGARGKDFNMRWIASMVADVHRILTRGGIFIYPWDKKDPSKPGKLRLMYEANPMSMLVEQAGGAATTGRERILDIQPTQLHQRVPVFLGSKNEVAEATRYHLDADKA.

Mg(2+) contacts are provided by E90, D112, L114, and D115. Residues 115–118 (DGSS), N207, and K273 each bind substrate. Position 279 (E279) interacts with Mg(2+).

The protein belongs to the FBPase class 1 family. Homotetramer. Mg(2+) is required as a cofactor.

The protein localises to the cytoplasm. The catalysed reaction is beta-D-fructose 1,6-bisphosphate + H2O = beta-D-fructose 6-phosphate + phosphate. Its pathway is carbohydrate biosynthesis; gluconeogenesis. This chain is Fructose-1,6-bisphosphatase class 1, found in Xanthomonas euvesicatoria pv. vesicatoria (strain 85-10) (Xanthomonas campestris pv. vesicatoria).